Reading from the N-terminus, the 397-residue chain is Succinate--CoA ligase [ADP-forming] subunit beta (397 aa).

One can recognise an ATP-grasp domain in the interval 9–254 (KALLKGYGAP…ETEEDAKEIE (246 aa)). ATP contacts are provided by residues Lys46, 53–55 (GRG), Glu109, Ala112, and Glu117. Mg(2+) contacts are provided by Asn209 and Asp223. Substrate contacts are provided by residues Asn274 and 331-333 (GIM).

Belongs to the succinate/malate CoA ligase beta subunit family. As to quaternary structure, heterotetramer of two alpha and two beta subunits. Requires Mg(2+) as cofactor.

It catalyses the reaction succinate + ATP + CoA = succinyl-CoA + ADP + phosphate. It carries out the reaction GTP + succinate + CoA = succinyl-CoA + GDP + phosphate. The protein operates within carbohydrate metabolism; tricarboxylic acid cycle; succinate from succinyl-CoA (ligase route): step 1/1. Functionally, succinyl-CoA synthetase functions in the citric acid cycle (TCA), coupling the hydrolysis of succinyl-CoA to the synthesis of either ATP or GTP and thus represents the only step of substrate-level phosphorylation in the TCA. The beta subunit provides nucleotide specificity of the enzyme and binds the substrate succinate, while the binding sites for coenzyme A and phosphate are found in the alpha subunit. This Agrobacterium fabrum (strain C58 / ATCC 33970) (Agrobacterium tumefaciens (strain C58)) protein is Succinate--CoA ligase [ADP-forming] subunit beta.